Reading from the N-terminus, the 125-residue chain is Small ribosomal subunit protein uS12 (125 aa).

The disordered stretch occupies residues 1–28 (MPTISQLIGSERKRLTRKTKSPALKSCP). 3-methylthioaspartic acid is present on aspartate 89. A disordered region spans residues 104–125 (TAGVKDRRQSRSKYGAKAPKNN).

Belongs to the universal ribosomal protein uS12 family. As to quaternary structure, part of the 30S ribosomal subunit. Contacts proteins S8 and S17. May interact with IF1 in the 30S initiation complex.

With S4 and S5 plays an important role in translational accuracy. Functionally, interacts with and stabilizes bases of the 16S rRNA that are involved in tRNA selection in the A site and with the mRNA backbone. Located at the interface of the 30S and 50S subunits, it traverses the body of the 30S subunit contacting proteins on the other side and probably holding the rRNA structure together. The combined cluster of proteins S8, S12 and S17 appears to hold together the shoulder and platform of the 30S subunit. The protein is Small ribosomal subunit protein uS12 of Prochlorococcus marinus (strain MIT 9515).